The primary structure comprises 270 residues: Tetraspanin-18 (270 aa).

Topologically, residues 1-15 are cytoplasmic; the sequence is MRRNCCHVSFASTLK. A helical membrane pass occupies residues 16–36; it reads ILNFVQAFIGVSIIIYSIWML. Over 37–99 the chain is Extracellular; that stretch reads HEYSRHLPVD…LRSLDLPAPW (63 aa). Residues 100 to 120 traverse the membrane as a helical segment; it reads FIYSFMAVGILVCIVTFIGFI. Over 121–132 the chain is Cytoplasmic; that stretch reads AAEAINGCCLCF. Residues 133–153 form a helical membrane-spanning segment; that stretch reads YSILKTLLILLEAALVAYIAI. At 154-183 the chain is on the extracellular side; it reads DRHWEKDLPYDPTGELSSLRAFIEENIDIC. A helical transmembrane segment spans residues 184-204; sequence KWVGIAVVAVQLLSLLLAMVL. Topologically, residues 205 to 270 are cytoplasmic; that stretch reads RAMVSTPKPE…NQSPPVNPKG (66 aa). The interval 212 to 249 is disordered; that stretch reads KPELDEEEDDENPRSRTWDPLLGPQGNQAPAGSSKIEN. Over residues 236–249 the composition is skewed to polar residues; the sequence is QGNQAPAGSSKIEN. The residue at position 245 (serine 245) is a Phosphoserine.

This sequence belongs to the tetraspanin (TM4SF) family. As to quaternary structure, homodimer. Constituent of tobamovirus replication complex. As to expression, expressed in rosette leaves.

It is found in the membrane. The protein localises to the vacuole membrane. May be involved in the regulation of cell differentiation. Functionally, promotes intracellular multiplication of tobamoviruses, probably being a component of the replication complex. In Arabidopsis thaliana (Mouse-ear cress), this protein is Tetraspanin-18 (TOM2AH2).